The primary structure comprises 434 residues: Nicotinate phosphoribosyltransferase (434 aa).

Residue H242 is modified to Phosphohistidine; by autocatalysis.

Belongs to the NAPRTase family. Post-translationally, transiently phosphorylated on a His residue during the reaction cycle. Phosphorylation strongly increases the affinity for substrates and increases the rate of nicotinate D-ribonucleotide production. Dephosphorylation regenerates the low-affinity form of the enzyme, leading to product release.

It carries out the reaction nicotinate + 5-phospho-alpha-D-ribose 1-diphosphate + ATP + H2O = nicotinate beta-D-ribonucleotide + ADP + phosphate + diphosphate. It functions in the pathway cofactor biosynthesis; NAD(+) biosynthesis; nicotinate D-ribonucleotide from nicotinate: step 1/1. Catalyzes the synthesis of beta-nicotinate D-ribonucleotide from nicotinate and 5-phospho-D-ribose 1-phosphate at the expense of ATP. In Rhizobium rhizogenes (strain K84 / ATCC BAA-868) (Agrobacterium radiobacter), this protein is Nicotinate phosphoribosyltransferase.